The primary structure comprises 135 residues: ATP synthase epsilon chain (135 aa).

Belongs to the ATPase epsilon chain family. F-type ATPases have 2 components, CF(1) - the catalytic core - and CF(0) - the membrane proton channel. CF(1) has five subunits: alpha(3), beta(3), gamma(1), delta(1), epsilon(1). CF(0) has three main subunits: a, b and c.

It localises to the cell inner membrane. Its function is as follows. Produces ATP from ADP in the presence of a proton gradient across the membrane. In Desulforapulum autotrophicum (strain ATCC 43914 / DSM 3382 / VKM B-1955 / HRM2) (Desulfobacterium autotrophicum), this protein is ATP synthase epsilon chain.